Reading from the N-terminus, the 272-residue chain is Glutamate racemase (272 aa).

Substrate is bound by residues 9 to 10 (DS) and 41 to 42 (YG). C73 (proton donor/acceptor) is an active-site residue. 74–75 (NT) lines the substrate pocket. Catalysis depends on C183, which acts as the Proton donor/acceptor. 184-185 (TH) lines the substrate pocket.

It belongs to the aspartate/glutamate racemases family.

The catalysed reaction is L-glutamate = D-glutamate. It participates in cell wall biogenesis; peptidoglycan biosynthesis. Functionally, provides the (R)-glutamate required for cell wall biosynthesis. This is Glutamate racemase from Shewanella sp. (strain MR-7).